Consider the following 119-residue polypeptide: Hisactophilin-3 (119 aa).

Glycine 2 carries N-myristoyl glycine lipidation. The interval 8-110 is contains several HHXH repeats; the sequence is SHHGHFLSAE…SIYTTHHHHH (103 aa). 2 consecutive repeat copies span residues 34–47 and 75–87. Positions 34–87 are 2 X 13 AA approximate repeats; the sequence is FHVENHGHHKVAIRTHANKYVSINDNNDVYISHHFHGEHSLFHLEHHGGKVSIK.

Belongs to the hisactophilin family. Post-translationally, phosphorylated.

The protein resides in the cytoplasm. It is found in the cell membrane. May act as an intracellular pH sensor that links chemotactic signals to responses in the microfilament system of the cells by nucleating actin polymerization or stabilizing the filaments. This Dictyostelium discoideum (Social amoeba) protein is Hisactophilin-3 (hatC).